The following is a 269-amino-acid chain: 4-hydroxy-tetrahydrodipicolinate reductase (269 aa).

NAD(+) contacts are provided by residues 8-13 (GAAGRM) and Glu-34. An NADP(+)-binding site is contributed by Arg-35. Residues 98–100 (GTT) and 122–125 (APNY) each bind NAD(+). The Proton donor/acceptor role is filled by His-155. His-156 provides a ligand contact to (S)-2,3,4,5-tetrahydrodipicolinate. The active-site Proton donor is Lys-159. 165 to 166 (GT) provides a ligand contact to (S)-2,3,4,5-tetrahydrodipicolinate.

The protein belongs to the DapB family.

The protein localises to the cytoplasm. The enzyme catalyses (S)-2,3,4,5-tetrahydrodipicolinate + NAD(+) + H2O = (2S,4S)-4-hydroxy-2,3,4,5-tetrahydrodipicolinate + NADH + H(+). The catalysed reaction is (S)-2,3,4,5-tetrahydrodipicolinate + NADP(+) + H2O = (2S,4S)-4-hydroxy-2,3,4,5-tetrahydrodipicolinate + NADPH + H(+). Its pathway is amino-acid biosynthesis; L-lysine biosynthesis via DAP pathway; (S)-tetrahydrodipicolinate from L-aspartate: step 4/4. Its function is as follows. Catalyzes the conversion of 4-hydroxy-tetrahydrodipicolinate (HTPA) to tetrahydrodipicolinate. The chain is 4-hydroxy-tetrahydrodipicolinate reductase from Vibrio campbellii (strain ATCC BAA-1116).